Reading from the N-terminus, the 466-residue chain is Chromosomal replication initiator protein DnaA (466 aa).

Positions 1-85 are domain I, interacts with DnaA modulators; sequence MSLSLWQHCL…FEVGNKPVSA (85 aa). The disordered stretch occupies residues 82–122; sequence PVSARTTESVPKTVTHPAVNSTPTNSQPVRPSWDNQPQSQL. Residues 85-122 show a composition bias toward polar residues; it reads ARTTESVPKTVTHPAVNSTPTNSQPVRPSWDNQPQSQL. A domain II region spans residues 85-129; the sequence is ARTTESVPKTVTHPAVNSTPTNSQPVRPSWDNQPQSQLPELNYRS. A domain III, AAA+ region region spans residues 130-346; that stretch reads NVNPKHKFDN…GALNRVIANA (217 aa). The ATP site is built by Gly174, Gly176, Lys177, and Thr178. Residues 347 to 466 form a domain IV, binds dsDNA region; the sequence is NFTGRAITID…FSNLIRTLSS (120 aa).

This sequence belongs to the DnaA family. In terms of assembly, oligomerizes as a right-handed, spiral filament on DNA at oriC.

It localises to the cytoplasm. Its function is as follows. Plays an essential role in the initiation and regulation of chromosomal replication. ATP-DnaA binds to the origin of replication (oriC) to initiate formation of the DNA replication initiation complex once per cell cycle. Binds the DnaA box (a 9 base pair repeat at the origin) and separates the double-stranded (ds)DNA. Forms a right-handed helical filament on oriC DNA; dsDNA binds to the exterior of the filament while single-stranded (ss)DNA is stabiized in the filament's interior. The ATP-DnaA-oriC complex binds and stabilizes one strand of the AT-rich DNA unwinding element (DUE), permitting loading of DNA polymerase. After initiation quickly degrades to an ADP-DnaA complex that is not apt for DNA replication. Binds acidic phospholipids. This chain is Chromosomal replication initiator protein DnaA, found in Proteus mirabilis (strain HI4320).